We begin with the raw amino-acid sequence, 430 residues long: 3-phosphoshikimate 1-carboxyvinyltransferase (430 aa).

3 residues coordinate 3-phosphoshikimate: Lys25, Ser26, and Arg30. Lys25 is a phosphoenolpyruvate binding site. Phosphoenolpyruvate contacts are provided by Gly98 and Arg126. The 3-phosphoshikimate site is built by Ser169, Ser170, Gln171, Ser198, Glu313, and His342. Residue Gln171 participates in phosphoenolpyruvate binding. Glu313 (proton acceptor) is an active-site residue. Phosphoenolpyruvate is bound by residues Arg346, Arg387, and Lys412.

Belongs to the EPSP synthase family. Monomer.

The protein localises to the cytoplasm. It carries out the reaction 3-phosphoshikimate + phosphoenolpyruvate = 5-O-(1-carboxyvinyl)-3-phosphoshikimate + phosphate. It functions in the pathway metabolic intermediate biosynthesis; chorismate biosynthesis; chorismate from D-erythrose 4-phosphate and phosphoenolpyruvate: step 6/7. Functionally, catalyzes the transfer of the enolpyruvyl moiety of phosphoenolpyruvate (PEP) to the 5-hydroxyl of shikimate-3-phosphate (S3P) to produce enolpyruvyl shikimate-3-phosphate and inorganic phosphate. This is 3-phosphoshikimate 1-carboxyvinyltransferase from Mycobacterium leprae (strain TN).